The sequence spans 225 residues: Cardiotrophin-like cytokine factor 1 (225 aa).

The N-terminal stretch at 1–27 (MDLRAGDSWGMLACLCTVLWHLPAVPA) is a signal peptide. Asn-29 is a glycosylation site (N-linked (GlcNAc...) asparagine).

This sequence belongs to the IL-6 superfamily. In terms of assembly, forms a heteromeric complex with cardiotrophin-like cytokine CRLF1/CLF-1; the CRLF1-CLCF1 complex is a ligand for the ciliary neurotrophic factor receptor/CNTFR. The CRLF1-CLCF1 heterodimer binds SORL1 (via N-terminal ectodomain); within this complex, the interaction is mediated predominantly by the CRLF1 moiety. The tripartite signaling complex formed by CRLF1, CLCF1 and CNTFR also binds SORL1. Expressed predominantly in lymph nodes, spleen, peripheral blood lymphocytes, bone marrow, and fetal liver.

The protein localises to the secreted. In terms of biological role, in complex with CRLF1, forms a heterodimeric neurotropic cytokine that plays a crucial role during neuronal development. Also stimulates B-cells. Binds to and activates the ILST/gp130 receptor. This chain is Cardiotrophin-like cytokine factor 1 (CLCF1), found in Homo sapiens (Human).